Reading from the N-terminus, the 288-residue chain is MRGYATAYGAATVLNAIANWKGSAFGISLRTSAEVVLDDSEGVRGDVEGIDTTLIVRCVESVLSHFDLDYGGVVRTRSEIPVASGLKSSSAAANAAVLATVDALGEEIDMIDAVRIGVEAALDAGVTVTGAFDDACASMLGGVVVTDNLKRCLLKRDELHSDVVLLIPEEQFFSRDVDVERCRALSRVADAVFEMAIEGDYAGAMTLNGLLYCTALRRSPEPIVLALRAGAAGATLSGTGPAYAALVDDISGDDVVEAWSSLGGRIIRAAVENRSARMGQADLFQEGI.

81 to 91 (PVASGLKSSSA) provides a ligand contact to ATP.

Belongs to the GHMP kinase family. Archaeal shikimate kinase subfamily.

Its subcellular location is the cytoplasm. It carries out the reaction shikimate + ATP = 3-phosphoshikimate + ADP + H(+). The protein operates within metabolic intermediate biosynthesis; chorismate biosynthesis; chorismate from D-erythrose 4-phosphate and phosphoenolpyruvate: step 5/7. The sequence is that of Shikimate kinase from Methanothrix thermoacetophila (strain DSM 6194 / JCM 14653 / NBRC 101360 / PT) (Methanosaeta thermophila).